We begin with the raw amino-acid sequence, 474 residues long: Cytochrome c biogenesis protein CcsB (474 aa).

A run of 3 helical transmembrane segments spans residues 36–56 (LKLAIGLFLAIAAASIAGTVI), 96–116 (SWWFVALLLLLATSLTICTFR), and 182–202 (VGPIVVHVSLLLIMAGAMIGA).

This sequence belongs to the Ccs1/CcsB family. May interact with CcsA.

The protein localises to the cell inner membrane. In terms of biological role, required during biogenesis of c-type cytochromes (cytochrome c6 and cytochrome f) at the step of heme attachment. The sequence is that of Cytochrome c biogenesis protein CcsB from Gloeobacter violaceus (strain ATCC 29082 / PCC 7421).